Reading from the N-terminus, the 739-residue chain is Probable beta-glucosidase L (739 aa).

Positions 1–17 (MQTLFLSLLAAAVTVHA) are cleaved as a signal peptide. N-linked (GlcNAc...) asparagine glycans are attached at residues Asn40 and Asn224. Asp252 is a catalytic residue. N-linked (GlcNAc...) asparagine glycosylation occurs at Asn398.

Belongs to the glycosyl hydrolase 3 family.

The protein localises to the secreted. It catalyses the reaction Hydrolysis of terminal, non-reducing beta-D-glucosyl residues with release of beta-D-glucose.. It functions in the pathway glycan metabolism; cellulose degradation. Its function is as follows. Beta-glucosidases are one of a number of cellulolytic enzymes involved in the degradation of cellulosic biomass. Catalyzes the last step releasing glucose from the inhibitory cellobiose. In Aspergillus fumigatus (strain CBS 144.89 / FGSC A1163 / CEA10) (Neosartorya fumigata), this protein is Probable beta-glucosidase L (bglL).